We begin with the raw amino-acid sequence, 108 residues long: DNA-binding protein HBbu (108 aa).

Belongs to the bacterial histone-like protein family.

Its function is as follows. Histone-like DNA-binding protein which is capable of wrapping DNA to stabilize it, and thus to prevent its denaturation under extreme environmental conditions. This chain is DNA-binding protein HBbu (hbb), found in Borrelia andersonii (Borreliella andersonii).